Consider the following 95-residue polypeptide: Protein TRACHEARY ELEMENT DIFFERENTIATION-RELATED 6 (95 aa).

At 1–3 (MAT) the chain is on the extracellular side. A helical membrane pass occupies residues 4–24 (IFIVFVSFGCVFVLGIAAFVL). Topologically, residues 25–95 (CCLIKKWKCS…KLGTASTSKA (71 aa)) are cytoplasmic.

As to quaternary structure, interacts with the secondary cell wall (SCW)-related cellulose synthase complex. In terms of tissue distribution, accumulates in cells differentiating into tracheary element (TE) which undergo secondary cell wall (SCW) formation.

Its subcellular location is the cell membrane. It is found in the secreted. It localises to the cell wall. Functionally, involved in the secondary cell wall (SCW) formation of vessel elements (e.g. protoxylem and metaxylem), thus promoting tracheary element (TE) differentiation. The chain is Protein TRACHEARY ELEMENT DIFFERENTIATION-RELATED 6 from Zinnia elegans (Garden zinnia).